Here is a 333-residue protein sequence, read N- to C-terminus: L-lactate dehydrogenase (333 aa).

NAD(+) is bound by residues 29 to 57 and arginine 99; that span reads GQVGMACAYSILQQNLANELCLVDVVADK. Residues arginine 106, asparagine 138, and arginine 169 each contribute to the substrate site. Residue asparagine 138 coordinates NAD(+). The active-site Proton acceptor is the histidine 193. Position 249 (threonine 249) interacts with substrate.

The protein belongs to the LDH/MDH superfamily. LDH family. Homotetramer.

It localises to the cytoplasm. The enzyme catalyses (S)-lactate + NAD(+) = pyruvate + NADH + H(+). It participates in fermentation; pyruvate fermentation to lactate; (S)-lactate from pyruvate: step 1/1. The polypeptide is L-lactate dehydrogenase (ldh-1) (Caenorhabditis elegans).